Reading from the N-terminus, the 100-residue chain is uncharacterized protein (100 aa).

The signal sequence occupies residues 1–18 (MWGFLVLKARWLVTPVRT). The disordered stretch occupies residues 48 to 86 (LTRGVIRVSPQERSQQNQSAPKGPTPSTRPKPRTLGPQA). Residues 58–69 (QERSQQNQSAPK) show a composition bias toward polar residues. N-linked (GlcNAc...) asparagine glycosylation occurs at Asn-64.

The protein resides in the secreted. This is an uncharacterized protein from Homo sapiens (Human).